A 541-amino-acid chain; its full sequence is DNA polymerase epsilon subunit B (541 aa).

It belongs to the DNA polymerase epsilon subunit B family. As to quaternary structure, heterotetramer. Consists of four subunits: POL2, DPB2, DPB3 and DPB4.

Its subcellular location is the nucleus. In terms of biological role, as accessory component of the DNA polymerase epsilon (DNA polymerase II) participates in chromosomal DNA replication. The chain is DNA polymerase epsilon subunit B (DPB2) from Cryptococcus neoformans var. neoformans serotype D (strain B-3501A) (Filobasidiella neoformans).